Consider the following 266-residue polypeptide: Glycine--tRNA ligase beta subunit (266 aa).

Belongs to the class-II aminoacyl-tRNA synthetase family. As to quaternary structure, tetramer of two alpha and two beta subunits.

It is found in the cytoplasm. It carries out the reaction tRNA(Gly) + glycine + ATP = glycyl-tRNA(Gly) + AMP + diphosphate. The protein is Glycine--tRNA ligase beta subunit (glyS) of Moraxella catarrhalis (Branhamella catarrhalis).